Here is a 506-residue protein sequence, read N- to C-terminus: Anaerobic nitric oxide reductase transcription regulator NorR (506 aa).

4-aspartylphosphate is present on Asp57. Residues 187–416 (MIGLSPAMTQ…LEHAIHRAVV (230 aa)) form the Sigma-54 factor interaction domain. ATP contacts are provided by residues 215–222 (GETGTGKE) and 278–287 (ADNGTLFLDE). Residues 481-500 (WAASARALETDVANLHRLAK) constitute a DNA-binding region (H-T-H motif).

Its pathway is nitrogen metabolism; nitric oxide reduction. Functionally, required for the expression of anaerobic nitric oxide (NO) reductase, acts as a transcriptional activator for at least the norVW operon. Activation also requires sigma-54. In Salmonella agona (strain SL483), this protein is Anaerobic nitric oxide reductase transcription regulator NorR.